The chain runs to 125 residues: Ribosome-binding factor A (125 aa).

It belongs to the RbfA family. Monomer. Binds 30S ribosomal subunits, but not 50S ribosomal subunits or 70S ribosomes.

It localises to the cytoplasm. Its function is as follows. One of several proteins that assist in the late maturation steps of the functional core of the 30S ribosomal subunit. Associates with free 30S ribosomal subunits (but not with 30S subunits that are part of 70S ribosomes or polysomes). Required for efficient processing of 16S rRNA. May interact with the 5'-terminal helix region of 16S rRNA. The chain is Ribosome-binding factor A from Kosmotoga olearia (strain ATCC BAA-1733 / DSM 21960 / TBF 19.5.1).